The following is a 427-amino-acid chain: Trigger factor (427 aa).

In terms of domain architecture, PPIase FKBP-type spans 163–248; that stretch reads GDTVILDFEG…LHEIKTKEVP (86 aa).

Belongs to the FKBP-type PPIase family. Tig subfamily.

The protein localises to the cytoplasm. It carries out the reaction [protein]-peptidylproline (omega=180) = [protein]-peptidylproline (omega=0). Involved in protein export. Acts as a chaperone by maintaining the newly synthesized protein in an open conformation. Functions as a peptidyl-prolyl cis-trans isomerase. The polypeptide is Trigger factor (Listeria monocytogenes serotype 4a (strain HCC23)).